The primary structure comprises 307 residues: Porphobilinogen deaminase (307 aa).

Cys-239 is subject to S-(dipyrrolylmethanemethyl)cysteine.

It belongs to the HMBS family. In terms of assembly, monomer. It depends on dipyrromethane as a cofactor.

It carries out the reaction 4 porphobilinogen + H2O = hydroxymethylbilane + 4 NH4(+). The protein operates within porphyrin-containing compound metabolism; protoporphyrin-IX biosynthesis; coproporphyrinogen-III from 5-aminolevulinate: step 2/4. In terms of biological role, tetrapolymerization of the monopyrrole PBG into the hydroxymethylbilane pre-uroporphyrinogen in several discrete steps. This is Porphobilinogen deaminase from Campylobacter jejuni subsp. jejuni serotype O:6 (strain 81116 / NCTC 11828).